Reading from the N-terminus, the 280-residue chain is Chaperone protein DnaJ 2 (280 aa).

In terms of domain architecture, J spans D6–G70.

Belongs to the DnaJ family. In terms of assembly, forms a heterononamer with DnaJ and DafA in the resting state. Three copies of each protein are present in the complex.

The protein localises to the cytoplasm. Functionally, does not influence ATP binding or hydrolysis nor ADP release. Exerts influence on the interaction of DnaK with substrates; in the presence of DafA, DnaJ inhibits substrate binding, and substrate already bound to DnaK is displaced by DnaJ and DafA. The chain is Chaperone protein DnaJ 2 (dnaJ2) from Thermus thermophilus (strain ATCC 27634 / DSM 579 / HB8).